A 121-amino-acid chain; its full sequence is Large ribosomal subunit protein uL18 (121 aa).

Belongs to the universal ribosomal protein uL18 family. Part of the 50S ribosomal subunit; part of the 5S rRNA/L5/L18/L25 subcomplex. Contacts the 5S and 23S rRNAs.

In terms of biological role, this is one of the proteins that bind and probably mediate the attachment of the 5S RNA into the large ribosomal subunit, where it forms part of the central protuberance. This chain is Large ribosomal subunit protein uL18, found in Ehrlichia chaffeensis (strain ATCC CRL-10679 / Arkansas).